The sequence spans 410 residues: Peptidase T-like protein YPO1009/y3403/YP_3421 (410 aa).

H82 contributes to the Zn(2+) binding site. Residue D84 is part of the active site. Position 144 (D144) interacts with Zn(2+). The active-site Proton acceptor is the E176. Zn(2+)-binding residues include E177, D200, and H382.

It belongs to the peptidase M20B family. It depends on Zn(2+) as a cofactor.

The protein is Peptidase T-like protein YPO1009/y3403/YP_3421 of Yersinia pestis.